Consider the following 561-residue polypeptide: Putative cysteine ligase BshC (561 aa).

Positions 472-517 form a coiled coil; that stretch reads LAQSVEKVMQSTLNQVENLKSKTIKAEKQRHNDLIAQIEKSRDNLL.

Belongs to the BshC family.

The sequence is that of Putative cysteine ligase BshC from Chloroherpeton thalassium (strain ATCC 35110 / GB-78).